Here is a 346-residue protein sequence, read N- to C-terminus: Cyclin-dependent kinase 7 (346 aa).

Residue A2 is modified to N-acetylalanine. A Phosphoserine modification is found at S7. The 284-residue stretch at 12 to 295 (YEKLDFLGEG…ATQALKMKYF (284 aa)) folds into the Protein kinase domain. Residues 18–26 (LGEGQFATV) and K41 each bind ATP. Catalysis depends on D137, which acts as the Proton acceptor. Residue S164 is modified to Phosphoserine; by CDK1 and CDK2. Position 170 is a phosphothreonine; by CDK2 (T170). Residue S321 is modified to Phosphoserine.

The protein belongs to the protein kinase superfamily. CMGC Ser/Thr protein kinase family. CDC2/CDKX subfamily. In terms of assembly, associates primarily with cyclin-H (CCNH) and MAT1 to form the CAK complex. CAK can further associate with the core-TFIIH to form the TFIIH basal transcription factor; this complex is sensitive to UV light. The CAK complex binds to p53/TP53 in response to DNA damage. Interacts with CDK2, SF1/NR5A1, PUF60 and PRKCI. Interacts with HINT1. Post-translationally, phosphorylation of Ser-164 during mitosis inactivates the enzyme. Phosphorylation of Thr-170 is required for activity. Phosphorylated at Ser-164 and Thr-170 by CDK2. In terms of tissue distribution, ubiquitous.

The protein localises to the nucleus. Its subcellular location is the cytoplasm. The protein resides in the perinuclear region. It catalyses the reaction L-seryl-[protein] + ATP = O-phospho-L-seryl-[protein] + ADP + H(+). The enzyme catalyses L-threonyl-[protein] + ATP = O-phospho-L-threonyl-[protein] + ADP + H(+). It carries out the reaction [DNA-directed RNA polymerase] + ATP = phospho-[DNA-directed RNA polymerase] + ADP + H(+). Inactivated by phosphorylation. Repressed by roscovitine (seliciclib, CYC202), R547 (Ro-4584820) and SNS-032 (BMS-387032). The association of p53/TP53 to the CAK complex in response to DNA damage reduces kinase activity toward CDK2 and RNA polymerase II repetitive C-terminal domain (CTD), thus stopping cell cycle progression. The inactivation by roscovitine promotes caspase-mediated apoptosis in leukemic cells. Specifically inactivated by THZ1. Serine/threonine kinase involved in cell cycle control and in RNA polymerase II-mediated RNA transcription. Cyclin-dependent kinases (CDKs) are activated by the binding to a cyclin and mediate the progression through the cell cycle. Each different complex controls a specific transition between 2 subsequent phases in the cell cycle. Required for both activation and complex formation of CDK1/cyclin-B during G2-M transition, and for activation of CDK2/cyclins during G1-S transition (but not complex formation). CDK7 is the catalytic subunit of the CDK-activating kinase (CAK) complex. Phosphorylates SPT5/SUPT5H, SF1/NR5A1, POLR2A, p53/TP53, CDK1, CDK2, CDK4, CDK6 and CDK11B/CDK11. Initiates transcription by RNA polymerase II by mediating phosphorylation of POLR2A at 'Ser-5' of the repetitive C-terminal domain (CTD) when POLR2A is in complex with DNA, promoting dissociation from DNA and initiation. CAK activates the cyclin-associated kinases CDK1, CDK2, CDK4 and CDK6 by threonine phosphorylation, thus regulating cell cycle progression. CAK complexed to the core-TFIIH basal transcription factor activates RNA polymerase II by serine phosphorylation of the CTD of POLR2A, allowing its escape from the promoter and elongation of the transcripts. Its expression and activity are constant throughout the cell cycle. Upon DNA damage, triggers p53/TP53 activation by phosphorylation, but is inactivated in turn by p53/TP53; this feedback loop may lead to an arrest of the cell cycle and of the transcription, helping in cell recovery, or to apoptosis. Required for DNA-bound peptides-mediated transcription and cellular growth inhibition. This chain is Cyclin-dependent kinase 7 (CDK7), found in Homo sapiens (Human).